The sequence spans 868 residues: Probable mixed-linked glucan synthase 3 (868 aa).

Residues 36–68 (ERKAAGGGGGGAKGKHWAAADKGERRAAKECGG) form a disordered region. Residues 53–68 (AAADKGERRAAKECGG) show a composition bias toward basic and acidic residues. A run of 2 helical transmembrane segments spans residues 86-106 (LLHP…LFFG) and 116-136 (IMWF…SWLL). D211 is an active-site residue. The substrate site is built by D412 and D414. D573 is an active-site residue. Helical transmembrane passes span 649 to 669 (IYPV…MWLI), 686 to 706 (LLMI…WAGI), 717 to 737 (FFMI…VVNL), 771 to 791 (MLIP…VAIG), 809 to 829 (IMGL…ALAI), and 837 to 857 (PIIL…VYVA).

It belongs to the glycosyltransferase 2 family. Plant cellulose synthase-like F subfamily.

It is found in the golgi apparatus membrane. May catalyze both beta-1,3 and beta-1,4 glycosidic linkage on beta-D-glucan. Essential for (1,3;1,4)-beta-D-glucans synthesis in grasses and cereals (Poaceae). The mixed-linked glucans (which are not present in walls of dicotyledons or most other monocotyledonous plants) are particularly important constituents of the walls of the starchy endosperm and aleurone cells of cereal grains such as oats, wheat, rice and barley. They can account for up to 70% by weight of the wall. This is Probable mixed-linked glucan synthase 3 (CSLF3) from Oryza sativa subsp. indica (Rice).